Consider the following 213-residue polypeptide: Ethylene-responsive transcription factor WIN1 (213 aa).

Residues 15–72 constitute a DNA-binding region (AP2/ERF); the sequence is KFRGVRQRHWGSWVSEIRHPLLKRRVWLGTFETAEEAARAYDEAAVLMSGRNAKTNFP. A compositionally biased stretch (polar residues) spans 70–80; the sequence is NFPIQRSSTGE. Disordered stretches follow at residues 70 to 99 and 159 to 213; these read NFPI…GSST and ASTD…RFII. A compositionally biased stretch (low complexity) spans 159–174; sequence ASTDAASQSTSATTAP.

This sequence belongs to the AP2/ERF transcription factor family. ERF subfamily. As to expression, mostly expressed in roots, stems and anthers, and, to a lower extent, in leaves, seeds and silks.

It is found in the nucleus. Its function is as follows. Promotes cuticle formation by inducing the expression of enzymes involved in wax biosynthesis, particularly promoting very-long-chain waxes formation. Confers drought resistance. Acts as a transcriptional activator binding directly to promoter regions of CER2, CER3.2 and KCS1, wax biosynthesis-related genes. Binds to the GCC-box pathogenesis-related promoter element. May be involved in the regulation of gene expression by stress factors and by components of stress signal transduction pathways. The chain is Ethylene-responsive transcription factor WIN1 from Zea mays (Maize).